Here is a 215-residue protein sequence, read N- to C-terminus: Cytochrome b6 (215 aa).

A helical membrane pass occupies residues 32–52 (IFYCLGGVTLICFLVQFATGF). C35 provides a ligand contact to heme c. 2 residues coordinate heme b: H86 and H100. A run of 3 helical transmembrane segments spans residues 90–110 (ASMM…TGGF), 116–136 (LTWV…VTGY), and 186–206 (AHTF…FLMI). 2 residues coordinate heme b: H187 and H202.

It belongs to the cytochrome b family. PetB subfamily. In terms of assembly, the 4 large subunits of the cytochrome b6-f complex are cytochrome b6, subunit IV (17 kDa polypeptide, PetD), cytochrome f and the Rieske protein, while the 4 small subunits are PetG, PetL, PetM and PetN. The complex functions as a dimer. The cofactor is heme b. Heme c serves as cofactor.

It localises to the cell inner membrane. In terms of biological role, component of the cytochrome b6-f complex, which mediates electron transfer between photosystem II (PSII) and photosystem I (PSI), cyclic electron flow around PSI, and state transitions. In Gloeobacter violaceus (strain ATCC 29082 / PCC 7421), this protein is Cytochrome b6.